The primary structure comprises 220 residues: Response regulator ArlR (220 aa).

Positions 3–116 (KILIVEDEQN…ELLARIRAML (114 aa)) constitute a Response regulatory domain. Asp-52 carries the post-translational modification 4-aspartylphosphate. The segment at residues 122–220 (KNLIDIKGII…VRGVGYVVRQ (99 aa)) is a DNA-binding region (ompR/PhoB-type).

Post-translationally, phosphorylated by ArlS.

The protein resides in the cytoplasm. In terms of biological role, member of the two-component regulatory system ArlS/ArlR. This is Response regulator ArlR (arlR) from Staphylococcus saprophyticus subsp. saprophyticus (strain ATCC 15305 / DSM 20229 / NCIMB 8711 / NCTC 7292 / S-41).